Reading from the N-terminus, the 204-residue chain is High frequency lysogenization protein HflD homolog (204 aa).

This sequence belongs to the HflD family.

Its subcellular location is the cytoplasm. It localises to the cell inner membrane. This is High frequency lysogenization protein HflD homolog from Actinobacillus succinogenes (strain ATCC 55618 / DSM 22257 / CCUG 43843 / 130Z).